Reading from the N-terminus, the 190-residue chain is Elongation factor P-like protein (190 aa).

Belongs to the elongation factor P family.

The polypeptide is Elongation factor P-like protein (Escherichia fergusonii (strain ATCC 35469 / DSM 13698 / CCUG 18766 / IAM 14443 / JCM 21226 / LMG 7866 / NBRC 102419 / NCTC 12128 / CDC 0568-73)).